Here is a 339-residue protein sequence, read N- to C-terminus: Replication factor C subunit 4 (339 aa).

G49–T56 contributes to the ATP binding site.

The protein belongs to the activator 1 small subunits family. As to quaternary structure, heterotetramer of subunits RFC2, RFC3, RFC4 and RFC5 that can form a complex with RFC1.

It is found in the nucleus. May be involved in DNA replication and thus regulate cell proliferation. In Arabidopsis thaliana (Mouse-ear cress), this protein is Replication factor C subunit 4 (RFC4).